The chain runs to 509 residues: ATP synthase subunit alpha (509 aa).

An ATP-binding site is contributed by 171–178 (GDRKTGKT).

It belongs to the ATPase alpha/beta chains family. As to quaternary structure, F-type ATPases have 2 components, CF(1) - the catalytic core - and CF(0) - the membrane proton channel. CF(1) has five subunits: alpha(3), beta(3), gamma(1), delta(1), epsilon(1). CF(0) has three main subunits: a(1), b(2) and c(9-12). The alpha and beta chains form an alternating ring which encloses part of the gamma chain. CF(1) is attached to CF(0) by a central stalk formed by the gamma and epsilon chains, while a peripheral stalk is formed by the delta and b chains.

The protein localises to the cell inner membrane. It catalyses the reaction ATP + H2O + 4 H(+)(in) = ADP + phosphate + 5 H(+)(out). Produces ATP from ADP in the presence of a proton gradient across the membrane. The alpha chain is a regulatory subunit. This is ATP synthase subunit alpha from Ehrlichia chaffeensis (strain ATCC CRL-10679 / Arkansas).